Here is a 573-residue protein sequence, read N- to C-terminus: Splicing factor U2af large subunit B (573 aa).

Over residues 1 to 12 (MPDYEGNGEDID) the composition is skewed to acidic residues. The disordered stretch occupies residues 1–187 (MPDYEGNGED…DMAPPTSAML (187 aa)). Basic and acidic residues predominate over residues 38–145 (SDSKSQHSSR…QREHAKDRES (108 aa)). Residues 161-173 (SRSRSRSRSKSKR) are compositionally biased toward basic residues. 3 RRM domains span residues 239–322 (RRVY…RPSD), 359–437 (DRIF…RANQ), and 478–564 (EVIS…YPEN).

This sequence belongs to the splicing factor SR family. As to expression, expressed in stems, leaves and apical buds.

Its subcellular location is the nucleus. Functionally, necessary for the splicing of pre-mRNA. Binds to the U -enriched regions of plant introns. The chain is Splicing factor U2af large subunit B (U2AF65B) from Nicotiana plumbaginifolia (Leadwort-leaved tobacco).